Consider the following 318-residue polypeptide: Probable mitochondrial 2-oxoglutarate/malate carrier protein (318 aa).

Solcar repeat units lie at residues 22-111 (QSQL…IKDI), 119-210 (LPFT…TKQL), and 219-309 (DDIK…LNIL). 6 helical membrane-spanning segments follow: residues 28 to 48 (FVIG…IDSL), 79 to 99 (GFFT…TYTT), 125 to 145 (IMVG…ADLT), 185 to 205 (GCSP…SSYD), 225 to 245 (LIAS…LDVI), and 281 to 301 (FYKG…LTFI).

This sequence belongs to the mitochondrial carrier (TC 2.A.29) family.

Its subcellular location is the mitochondrion inner membrane. Its function is as follows. Mitochondrial solute carriers shuttle metabolites, nucleotides, and cofactors through the mitochondrial inner membrane. Catalyzes the transport of 2-oxoglutarate across the inner mitochondrial membrane in an electroneutral exchange for malate or other dicarboxylic acids, and plays an important role in several metabolic processes, including the malate-aspartate shuttle, the oxoglutarate/isocitrate shuttle, in gluconeogenesis from lactate, and in nitrogen metabolism. This chain is Probable mitochondrial 2-oxoglutarate/malate carrier protein (ucpC), found in Dictyostelium discoideum (Social amoeba).